The primary structure comprises 247 residues: ATP synthase subunit a, chloroplastic (247 aa).

The next 5 helical transmembrane spans lie at 28 to 48, 95 to 115, 134 to 154, 199 to 219, and 220 to 240; these read GQVLITSWIVVAVIGVICLLG, VPFLGTIFLFIFVSNWSGALI, INTTVALALLTSIAYFYAGIS, LVVGVLVSLVPLVVPIPIMLL, and GLFTSAIQALVFATLAGAYIG.

It belongs to the ATPase A chain family. As to quaternary structure, F-type ATPases have 2 components, CF(1) - the catalytic core - and CF(0) - the membrane proton channel. CF(1) has five subunits: alpha(3), beta(3), gamma(1), delta(1), epsilon(1). CF(0) has four main subunits: a, b, b' and c.

The protein localises to the plastid. The protein resides in the chloroplast thylakoid membrane. Functionally, key component of the proton channel; it plays a direct role in the translocation of protons across the membrane. In Chlorella vulgaris (Green alga), this protein is ATP synthase subunit a, chloroplastic.